We begin with the raw amino-acid sequence, 341 residues long: tRNA N6-adenosine threonylcarbamoyltransferase (341 aa).

Residues H114 and H118 each coordinate Fe cation. Substrate contacts are provided by residues 136–140 (LVSGG), D169, G182, D186, and N278. D304 is a binding site for Fe cation.

This sequence belongs to the KAE1 / TsaD family. Fe(2+) is required as a cofactor.

It is found in the cytoplasm. It catalyses the reaction L-threonylcarbamoyladenylate + adenosine(37) in tRNA = N(6)-L-threonylcarbamoyladenosine(37) in tRNA + AMP + H(+). Functionally, required for the formation of a threonylcarbamoyl group on adenosine at position 37 (t(6)A37) in tRNAs that read codons beginning with adenine. Is involved in the transfer of the threonylcarbamoyl moiety of threonylcarbamoyl-AMP (TC-AMP) to the N6 group of A37, together with TsaE and TsaB. TsaD likely plays a direct catalytic role in this reaction. The chain is tRNA N6-adenosine threonylcarbamoyltransferase from Lactococcus lactis subsp. cremoris (strain SK11).